The primary structure comprises 97 residues: Small ribosomal subunit protein bS20 (97 aa).

This sequence belongs to the bacterial ribosomal protein bS20 family.

Functionally, binds directly to 16S ribosomal RNA. This Prochlorococcus marinus (strain MIT 9515) protein is Small ribosomal subunit protein bS20.